The primary structure comprises 200 residues: Small ribosomal subunit protein uS4c (200 aa).

Positions 20 to 42 (GLTRKTTTRTSRPGQHGTQARKP) are disordered. Residues 23 to 37 (RKTTTRTSRPGQHGT) show a composition bias toward polar residues. In terms of domain architecture, S4 RNA-binding spans 90–152 (MRLDNVIFRL…PKSQSIVKNY (63 aa)).

Belongs to the universal ribosomal protein uS4 family. As to quaternary structure, part of the 30S ribosomal subunit. Contacts protein S5. The interaction surface between S4 and S5 is involved in control of translational fidelity.

The protein localises to the plastid. Its subcellular location is the chloroplast. Functionally, one of the primary rRNA binding proteins, it binds directly to 16S rRNA where it nucleates assembly of the body of the 30S subunit. Its function is as follows. With S5 and S12 plays an important role in translational accuracy. The sequence is that of Small ribosomal subunit protein uS4c (rps4) from Guillardia theta (Cryptophyte).